The primary structure comprises 829 residues: Protein Jade-1 (829 aa).

The segment covering 1–10 has biased composition (polar residues); that stretch reads MKRSRVPSTS. Positions 1 to 40 are disordered; that stretch reads MKRSRVPSTSEDSDNGSNSTSWSQHSNSKHRKQSGKRPSE. Residues 15-26 show a composition bias toward low complexity; sequence NGSNSTSWSQHS. A PHD-type 1 zinc finger spans residues 196–246; the sequence is DVVCDVCQSPDGEDGNEMVFCDKCNICVHQACYGILKVPEGSWLCRTCALG. The C2HC pre-PHD-type zinc-finger motif lies at 248-282; it reads FPKCHLCPKKGGAMKPTRSGTKWVHVSCALWIPEV. Residues 306-362 form a PHD-type 2 zinc finger; sequence LICCLCKEKTGACIQCSAKSCRVAFHVTCGLHCGLKMNTILTEADEVKFKSFCPKHS. Disordered regions lie at residues 368–408, 556–651, and 697–829; these read EEEG…PEET, PPVP…RRKS, and ATAP…VLAS. A compositionally biased stretch (basic and acidic residues) spans 374-390; sequence DRPVKVPTREDRSRNRG. Composition is skewed to polar residues over residues 394–405, 570–586, and 607–619; these read SASSQTRLSQNP, GQNSTLSSSEKGSNSYR, and SGDSVRSETVMSA. Over residues 622–648 the composition is skewed to basic and acidic residues; sequence RRSEGRTRSGESHRKEEESERPLEDRR. Positions 697–714 are enriched in polar residues; sequence ATAPNMYSGSPRKTNASH. The segment covering 738–754 has biased composition (basic and acidic residues); the sequence is KRSERTSAGRQTERQEA. The span at 762–774 shows a compositional bias: low complexity; it reads SSLKTFSTSPSSP. Positions 782–792 are enriched in basic and acidic residues; it reads TGSENRRHLEE.

This sequence belongs to the JADE family. As to quaternary structure, component of the HBO1 complex composed.

It localises to the nucleus. Its subcellular location is the chromosome. The protein resides in the cytoplasm. The protein localises to the cytoskeleton. It is found in the cilium basal body. Functionally, scaffold subunit of some HBO1 complexes, which have a histone H4 acetyltransferase activity. Plays a key role in HBO1 complex by directing KAT7/HBO1 specificity towards histone H4 acetylation (H4K5ac, H4K8ac and H4K12ac), regulating DNA replication initiation, regulating DNA replication initiation. The protein is Protein Jade-1 (jade1) of Danio rerio (Zebrafish).